The following is a 201-amino-acid chain: Endoribonuclease YbeY (201 aa).

The Zn(2+) site is built by His-120, His-124, and His-130. A disordered region spans residues 151-201; sequence DGADGADGADGARGAADGAADGGEGRRGDQGRRGDQGRGGGAGEPPAAPAR. The span at 173 to 186 shows a compositional bias: basic and acidic residues; the sequence is GEGRRGDQGRRGDQ.

It belongs to the endoribonuclease YbeY family. Zn(2+) serves as cofactor.

The protein localises to the cytoplasm. Functionally, single strand-specific metallo-endoribonuclease involved in late-stage 70S ribosome quality control and in maturation of the 3' terminus of the 16S rRNA. The polypeptide is Endoribonuclease YbeY (Frankia casuarinae (strain DSM 45818 / CECT 9043 / HFP020203 / CcI3)).